Consider the following 238-residue polypeptide: tRNA (guanine-N(1)-)-methyltransferase (238 aa).

S-adenosyl-L-methionine-binding positions include Gly109 and 129–134 (IGDFVL).

Belongs to the RNA methyltransferase TrmD family. As to quaternary structure, homodimer.

It localises to the cytoplasm. The catalysed reaction is guanosine(37) in tRNA + S-adenosyl-L-methionine = N(1)-methylguanosine(37) in tRNA + S-adenosyl-L-homocysteine + H(+). Specifically methylates guanosine-37 in various tRNAs. The sequence is that of tRNA (guanine-N(1)-)-methyltransferase from Exiguobacterium sp. (strain ATCC BAA-1283 / AT1b).